The following is a 287-amino-acid chain: Probable aquaporin PIP1-4 (287 aa).

N-acetylmethionine is present on methionine 1. The disordered stretch occupies residues 1–36 (MEGKEEDVRVGANKFPERQPIGTSAQSTDKDYKEPP). At 1-55 (MEGKEEDVRVGANKFPERQPIGTSAQSTDKDYKEPPPAPLFEPGELSSWSFYRAG) the chain is on the cytoplasmic side. A helical transmembrane segment spans residues 56–76 (IAEFIATFLFLYITVLTVMGV). At 77–92 (KRAPNMCASVGIQGIA) the chain is on the extracellular side. The helical transmembrane segment at 93 to 113 (WAFGGMIFALVYCTAGISGGH) threads the bilayer. Over 114 to 133 (INPAVTFGLFLARKLSLTRA) the chain is Cytoplasmic. The short motif at 115 to 117 (NPA) is the NPA 1 element. The chain crosses the membrane as a helical span at residues 134–154 (VFYMIMQCLGAICGAGVVKGF). Residues 155-175 (QPTPYQTLGGGANTVAHGYTK) lie on the Extracellular side of the membrane. The helical transmembrane segment at 176–196 (GSGLGAEIIGTFVLVYTVFSA) threads the bilayer. Over 197–209 (TDAKRSARDSHVP) the chain is Cytoplasmic. Residues 210-230 (ILAPLPIGFAVFLVHLATIPI) form a helical membrane-spanning segment. Topologically, residues 231–257 (TGTGINPARSLGAAIIYNKDHSWDDHW) are extracellular. Positions 236–238 (NPA) match the NPA 2 motif. Residues 258-278 (IFWVGPFIGAALAALYHQIVI) traverse the membrane as a helical segment. The Cytoplasmic segment spans residues 279–287 (RAIPFKSKS). Serine 285 carries the phosphoserine modification.

The protein belongs to the MIP/aquaporin (TC 1.A.8) family. PIP (TC 1.A.8.11) subfamily. In terms of tissue distribution, predominantly expressed in roots and green siliques. Also expressed above ground and in flower buds.

It is found in the cell membrane. In terms of biological role, aquaporins facilitate the transport of water and small neutral solutes across cell membranes. The protein is Probable aquaporin PIP1-4 (PIP1.4) of Arabidopsis thaliana (Mouse-ear cress).